We begin with the raw amino-acid sequence, 612 residues long: Chaperone protein DnaK (612 aa).

The residue at position 174 (threonine 174) is a Phosphothreonine; by autocatalysis. Residues 579–612 (GSAGTGAGSQAGSAAGSGDGQSMDAEFKVKDEDK) are disordered. Residues 581 to 597 (AGTGAGSQAGSAAGSGD) show a composition bias toward gly residues. Over residues 603–612 (AEFKVKDEDK) the composition is skewed to basic and acidic residues.

The protein belongs to the heat shock protein 70 family.

Acts as a chaperone. This chain is Chaperone protein DnaK, found in Symbiobacterium thermophilum (strain DSM 24528 / JCM 14929 / IAM 14863 / T).